The chain runs to 102 residues: NADH-quinone oxidoreductase subunit K 1 (102 aa).

3 helical membrane passes run 5 to 25, 31 to 51, and 65 to 85; these read LSHYLTVSAILFTLGVFGIFL, IVILMSVELILLAVNINMVAF, and LFILTVAAAEAAIGLAILVVF.

It belongs to the complex I subunit 4L family. In terms of assembly, NDH-1 is composed of 14 different subunits. Subunits NuoA, H, J, K, L, M, N constitute the membrane sector of the complex.

It localises to the cell inner membrane. The catalysed reaction is a quinone + NADH + 5 H(+)(in) = a quinol + NAD(+) + 4 H(+)(out). Functionally, NDH-1 shuttles electrons from NADH, via FMN and iron-sulfur (Fe-S) centers, to quinones in the respiratory chain. The immediate electron acceptor for the enzyme in this species is believed to be ubiquinone. Couples the redox reaction to proton translocation (for every two electrons transferred, four hydrogen ions are translocated across the cytoplasmic membrane), and thus conserves the redox energy in a proton gradient. This Rhizobium etli (strain ATCC 51251 / DSM 11541 / JCM 21823 / NBRC 15573 / CFN 42) protein is NADH-quinone oxidoreductase subunit K 1.